A 184-amino-acid polypeptide reads, in one-letter code: Putative F-box protein At4g22420 (184 aa).

Positions 1-46 (MAECPTDLINEMFLRLRATTLKKCRVLSKPCFSLIDSPEKRVIERS) constitute an F-box domain. The interval 68–126 (DDDEEEGNELKKSQARRNGVAKGEGNGNKVNGEAQEEVDDEEDDDDDASKGRGKHSRHV) is disordered. The span at 85–100 (NGVAKGEGNGNKVNGE) shows a compositional bias: low complexity. The segment covering 101–114 (AQEEVDDEEDDDDD) has biased composition (acidic residues).

This chain is Putative F-box protein At4g22420, found in Arabidopsis thaliana (Mouse-ear cress).